The following is a 284-amino-acid chain: Bifunctional protein FolD (284 aa).

Residues G165 to S167, S190, and I231 contribute to the NADP(+) site.

Belongs to the tetrahydrofolate dehydrogenase/cyclohydrolase family. In terms of assembly, homodimer.

It catalyses the reaction (6R)-5,10-methylene-5,6,7,8-tetrahydrofolate + NADP(+) = (6R)-5,10-methenyltetrahydrofolate + NADPH. The catalysed reaction is (6R)-5,10-methenyltetrahydrofolate + H2O = (6R)-10-formyltetrahydrofolate + H(+). It functions in the pathway one-carbon metabolism; tetrahydrofolate interconversion. Its function is as follows. Catalyzes the oxidation of 5,10-methylenetetrahydrofolate to 5,10-methenyltetrahydrofolate and then the hydrolysis of 5,10-methenyltetrahydrofolate to 10-formyltetrahydrofolate. This is Bifunctional protein FolD from Streptococcus thermophilus (strain ATCC BAA-250 / LMG 18311).